A 448-amino-acid polypeptide reads, in one-letter code: Trigger factor (448 aa).

The region spanning 167-253 is the PPIase FKBP-type domain; that stretch reads GSIVRVDFVE…IKDIKKRDIP (87 aa).

It belongs to the FKBP-type PPIase family. Tig subfamily.

It is found in the cytoplasm. The catalysed reaction is [protein]-peptidylproline (omega=180) = [protein]-peptidylproline (omega=0). Its function is as follows. Involved in protein export. Acts as a chaperone by maintaining the newly synthesized protein in an open conformation. Functions as a peptidyl-prolyl cis-trans isomerase. The chain is Trigger factor from Borrelia hermsii (strain HS1 / DAH).